The chain runs to 174 residues: uncharacterized protein (174 aa).

A signal peptide spans 1–31; sequence MCCVYRMNRPASGLTVVFCGKLSGKPGPKSA. Residues 39 to 59 form a disordered region; it reads KSGADDGGENPRFFSAGPRTE.

This is an uncharacterized protein from Escherichia coli (strain K12).